Here is a 58-residue protein sequence, read N- to C-terminus: uncharacterized protein (58 aa).

This is an uncharacterized protein from Methanocaldococcus jannaschii (strain ATCC 43067 / DSM 2661 / JAL-1 / JCM 10045 / NBRC 100440) (Methanococcus jannaschii).